The primary structure comprises 213 residues: Thiamine-phosphate synthase (213 aa).

Residues 40-44 and Asn-75 contribute to the 4-amino-2-methyl-5-(diphosphooxymethyl)pyrimidine site; that span reads QFREK. The Mg(2+) site is built by Asp-76 and Asp-95. Ser-113 lines the 4-amino-2-methyl-5-(diphosphooxymethyl)pyrimidine pocket. 139-141 serves as a coordination point for 2-[(2R,5Z)-2-carboxy-4-methylthiazol-5(2H)-ylidene]ethyl phosphate; that stretch reads TPS. Residue Lys-142 participates in 4-amino-2-methyl-5-(diphosphooxymethyl)pyrimidine binding. 2-[(2R,5Z)-2-carboxy-4-methylthiazol-5(2H)-ylidene]ethyl phosphate is bound by residues Gly-171 and 191-192; that span reads IS.

This sequence belongs to the thiamine-phosphate synthase family. Requires Mg(2+) as cofactor.

It carries out the reaction 2-[(2R,5Z)-2-carboxy-4-methylthiazol-5(2H)-ylidene]ethyl phosphate + 4-amino-2-methyl-5-(diphosphooxymethyl)pyrimidine + 2 H(+) = thiamine phosphate + CO2 + diphosphate. It catalyses the reaction 2-(2-carboxy-4-methylthiazol-5-yl)ethyl phosphate + 4-amino-2-methyl-5-(diphosphooxymethyl)pyrimidine + 2 H(+) = thiamine phosphate + CO2 + diphosphate. The catalysed reaction is 4-methyl-5-(2-phosphooxyethyl)-thiazole + 4-amino-2-methyl-5-(diphosphooxymethyl)pyrimidine + H(+) = thiamine phosphate + diphosphate. It functions in the pathway cofactor biosynthesis; thiamine diphosphate biosynthesis; thiamine phosphate from 4-amino-2-methyl-5-diphosphomethylpyrimidine and 4-methyl-5-(2-phosphoethyl)-thiazole: step 1/1. In terms of biological role, condenses 4-methyl-5-(beta-hydroxyethyl)thiazole monophosphate (THZ-P) and 2-methyl-4-amino-5-hydroxymethyl pyrimidine pyrophosphate (HMP-PP) to form thiamine monophosphate (TMP). The protein is Thiamine-phosphate synthase of Staphylococcus aureus (strain bovine RF122 / ET3-1).